A 47-amino-acid chain; its full sequence is PhoP/PhoQ regulator MgrB (47 aa).

A helical membrane pass occupies residues 6-26 (WVVLGIVVVVCLLLWAQVFNI).

Belongs to the MgrB family. May form homooligomers. Probably interacts with the periplasmic domain of PhoQ.

The protein resides in the cell inner membrane. PhoP-regulated transcription is redox-sensitive, being activated when the periplasm becomes more reducing. MgrB acts between DsbA/DsbB and PhoP/PhoQ in this pathway. Represses PhoP/PhoQ signaling, possibly by binding to the periplasmic domain of PhoQ, altering its activity and that of downstream effector PhoP. This is PhoP/PhoQ regulator MgrB from Salmonella agona (strain SL483).